Here is a 430-residue protein sequence, read N- to C-terminus: Probable folylpolyglutamate synthase (430 aa).

An ATP-binding site is contributed by 37–40 (GKET). Residue glutamate 132 participates in Mg(2+) binding. An ATP-binding site is contributed by aspartate 300.

Belongs to the folylpolyglutamate synthase family.

Its subcellular location is the mitochondrion. It catalyses the reaction (6S)-5,6,7,8-tetrahydrofolyl-(gamma-L-Glu)(n) + L-glutamate + ATP = (6S)-5,6,7,8-tetrahydrofolyl-(gamma-L-Glu)(n+1) + ADP + phosphate + H(+). Its pathway is cofactor biosynthesis; tetrahydrofolylpolyglutamate biosynthesis. Functionally, conversion of folates to polyglutamate derivatives. The protein is Probable folylpolyglutamate synthase (RMA1) of Saccharomyces cerevisiae (strain ATCC 204508 / S288c) (Baker's yeast).